The primary structure comprises 239 residues: ATP-dependent dethiobiotin synthetase BioD (239 aa).

15 to 20 (EIGKTF) is an ATP binding site. T19 is a Mg(2+) binding site. K40 is a catalytic residue. Residues D57, 118-121 (EGAG), and 178-179 (NH) each bind ATP. Positions 57 and 118 each coordinate Mg(2+).

The protein belongs to the dethiobiotin synthetase family. As to quaternary structure, homodimer. Requires Mg(2+) as cofactor.

Its subcellular location is the cytoplasm. The enzyme catalyses (7R,8S)-7,8-diammoniononanoate + CO2 + ATP = (4R,5S)-dethiobiotin + ADP + phosphate + 3 H(+). It participates in cofactor biosynthesis; biotin biosynthesis; biotin from 7,8-diaminononanoate: step 1/2. Functionally, catalyzes a mechanistically unusual reaction, the ATP-dependent insertion of CO2 between the N7 and N8 nitrogen atoms of 7,8-diaminopelargonic acid (DAPA, also called 7,8-diammoniononanoate) to form a ureido ring. The protein is ATP-dependent dethiobiotin synthetase BioD of Burkholderia lata (strain ATCC 17760 / DSM 23089 / LMG 22485 / NCIMB 9086 / R18194 / 383).